Reading from the N-terminus, the 648-residue chain is MRMRSLSAASSGYNGDPRGLGLERLKTVVRGKLRPSGSEIEWLWPSDQNNTASPAGAKTDQPTSAPRFFLTREATVFGPSWKPASRQIVASVLPVTGEMVMVSAERFSCMALFAVFLKLYRGFYMKPVAPCATHVRRPIMLAQFPVFDSRPSHGPQEQSGSHEPLARAAAQRRTKHNFLFMPGFPCLACVPISASAERHDRAMAACRAASLTEHLWPAYGIRALHMLNRTPAAASITRAVARRSRLLTADLTRSLETFPAGTITCAAGAPMIFSDCRLARLDFSAFYPCLYAAYVGKHRGLTKILHERLRRRAGSEDLKPALVTMFGGLRHVDANGYRFVVGASNIIAKAVEQTANRMGFGVAAYVKDGFWGAFDSSSKTTAEELRAECEKAANATLARLVVDKDGAGEPPVSLVLRLEGVYTDGLLINANKYWLFNSESGDSFICGVMGGHERSGLSRETTAAADDILKKIKASAKSIDDVEAIARSRIDAWIYAIFGHRGDVEFWAEQTPGDKDFLIPEEIRTTTVGKLEAADSCLGGELSYVFIPKNTQDTGAAKTKGGGARGWHSAPAAAFPCSLVEDVFCIKINYEAHLLPRLEGLLAWSRIYAWLQFRNQIPLADDEDESTTQAKETARIDYNYGDVSFLFA.

The interval 43 to 63 (LWPSDQNNTASPAGAKTDQPT) is disordered.

It belongs to the herpesviridae HEPA family. As to quaternary structure, associates with the primase and the helicase to form the helicase-primase complex. Interacts with the origin-binding protein. Interacts with the polymerase catalytic subunit.

Its subcellular location is the host nucleus. Its function is as follows. Component of the helicase/primase complex. Unwinds the DNA at the replication forks and generates single-stranded DNA for both leading and lagging strand synthesis. The primase synthesizes short RNA primers on the lagging strand that the polymerase presumably elongates using dNTPs. The primase-associated factor has no known catalytic activity in the complex and may serve to facilitate the formation of the replisome by directly interacting with the origin-binding protein and the polymerase. This is DNA helicase/primase complex-associated protein (UL8) from Amazona oratrix (yellow-headed parrot).